The following is a 258-amino-acid chain: Redox-sensing transcriptional repressor Rex (258 aa).

The H-T-H motif DNA-binding region spans 26-65 (LYLRALTALSERSVPTVSSEELAAAAGVNSAKLRKDFSYL). NAD(+) is bound at residue 100–105 (GIGNLG). Residues 219–258 (AGEEAAADGAAPPVAARKQQRSTGSADQGPDGDVPAVMPA) are disordered. Low complexity predominate over residues 225 to 234 (ADGAAPPVAA).

Belongs to the transcriptional regulatory Rex family. Homodimer.

The protein localises to the cytoplasm. Functionally, modulates transcription of respiratory genes in response to changes in cellular NADH/NAD(+) redox state. Binds to the DNA sequence motif 5'-TGTGAACGCGTTCACA-3' in the promoter of the cydABCD operon. May play a general role as a sensor of cellular redox balance. This is Redox-sensing transcriptional repressor Rex from Streptomyces coelicolor (strain ATCC BAA-471 / A3(2) / M145).